The following is a 339-amino-acid chain: D-erythrose-4-phosphate dehydrogenase (339 aa).

Residue Arg11–Ile12 coordinates NAD(+). Residues Ser158 to Thr160, Arg204, Thr217 to Lys218, and Arg240 contribute to the substrate site. Residue Cys159 is the Nucleophile of the active site. Asn322 lines the NAD(+) pocket.

Belongs to the glyceraldehyde-3-phosphate dehydrogenase family. Epd subfamily. In terms of assembly, homotetramer.

It is found in the cytoplasm. It catalyses the reaction D-erythrose 4-phosphate + NAD(+) + H2O = 4-phospho-D-erythronate + NADH + 2 H(+). Its pathway is cofactor biosynthesis; pyridoxine 5'-phosphate biosynthesis; pyridoxine 5'-phosphate from D-erythrose 4-phosphate: step 1/5. Its function is as follows. Catalyzes the NAD-dependent conversion of D-erythrose 4-phosphate to 4-phosphoerythronate. The polypeptide is D-erythrose-4-phosphate dehydrogenase (Aliivibrio fischeri (strain MJ11) (Vibrio fischeri)).